We begin with the raw amino-acid sequence, 195 residues long: uncharacterized protein (195 aa).

Residues 175 to 195 (ILGKISGFFGSIVSTIFSLFG) form a helical membrane-spanning segment.

It is found in the membrane. This is an uncharacterized protein from Methanocaldococcus jannaschii (strain ATCC 43067 / DSM 2661 / JAL-1 / JCM 10045 / NBRC 100440) (Methanococcus jannaschii).